The following is a 398-amino-acid chain: Succinate--CoA ligase [ADP-forming] subunit beta (398 aa).

An ATP-grasp domain is found at 9 to 254 (KALLKSFGAP…KTEEDAKEIE (246 aa)). ATP contacts are provided by residues Lys46, 53 to 55 (GRG), Glu109, Ala112, and Glu117. Asn209 and Asp223 together coordinate Mg(2+). Residues Asn274 and 331 to 333 (GIM) each bind substrate.

It belongs to the succinate/malate CoA ligase beta subunit family. Heterotetramer of two alpha and two beta subunits. Requires Mg(2+) as cofactor.

The enzyme catalyses succinate + ATP + CoA = succinyl-CoA + ADP + phosphate. It carries out the reaction GTP + succinate + CoA = succinyl-CoA + GDP + phosphate. It functions in the pathway carbohydrate metabolism; tricarboxylic acid cycle; succinate from succinyl-CoA (ligase route): step 1/1. Succinyl-CoA synthetase functions in the citric acid cycle (TCA), coupling the hydrolysis of succinyl-CoA to the synthesis of either ATP or GTP and thus represents the only step of substrate-level phosphorylation in the TCA. The beta subunit provides nucleotide specificity of the enzyme and binds the substrate succinate, while the binding sites for coenzyme A and phosphate are found in the alpha subunit. The polypeptide is Succinate--CoA ligase [ADP-forming] subunit beta (Allorhizobium ampelinum (strain ATCC BAA-846 / DSM 112012 / S4) (Agrobacterium vitis (strain S4))).